We begin with the raw amino-acid sequence, 101 residues long: Chaperone modulatory protein CbpM (101 aa).

This sequence belongs to the CbpM family.

Its function is as follows. Interacts with CbpA and inhibits both the DnaJ-like co-chaperone activity and the DNA binding activity of CbpA. Together with CbpA, modulates the activity of the DnaK chaperone system. Does not inhibit the co-chaperone activity of DnaJ. The polypeptide is Chaperone modulatory protein CbpM (Pseudomonas putida (strain ATCC 47054 / DSM 6125 / CFBP 8728 / NCIMB 11950 / KT2440)).